The primary structure comprises 147 residues: NADH-quinone oxidoreductase subunit A (147 aa).

Helical transmembrane passes span 16–36 (FAIF…GGWF), 68–88 (FYLV…LFAW), and 98–118 (VGFV…VYLV).

The protein belongs to the complex I subunit 3 family. In terms of assembly, NDH-1 is composed of 13 different subunits. Subunits NuoA, H, J, K, L, M, N constitute the membrane sector of the complex.

The protein localises to the cell inner membrane. The enzyme catalyses a quinone + NADH + 5 H(+)(in) = a quinol + NAD(+) + 4 H(+)(out). NDH-1 shuttles electrons from NADH, via FMN and iron-sulfur (Fe-S) centers, to quinones in the respiratory chain. The immediate electron acceptor for the enzyme in this species is believed to be ubiquinone. Couples the redox reaction to proton translocation (for every two electrons transferred, four hydrogen ions are translocated across the cytoplasmic membrane), and thus conserves the redox energy in a proton gradient. The protein is NADH-quinone oxidoreductase subunit A of Citrobacter koseri (strain ATCC BAA-895 / CDC 4225-83 / SGSC4696).